A 213-amino-acid polypeptide reads, in one-letter code: Pyridoxine/pyridoxamine 5'-phosphate oxidase (213 aa).

FMN is bound by residues 60 to 65, 75 to 76, Lys-82, and Gln-104; these read RMVLMK and YS. Lys-65 provides a ligand contact to substrate. Positions 122 and 126 each coordinate substrate. FMN-binding positions include 139 to 140 and Trp-184; that span reads QS. 190–192 serves as a coordination point for substrate; that stretch reads RLH. Residue Arg-194 participates in FMN binding.

The protein belongs to the pyridoxamine 5'-phosphate oxidase family. As to quaternary structure, homodimer. FMN serves as cofactor.

It catalyses the reaction pyridoxamine 5'-phosphate + O2 + H2O = pyridoxal 5'-phosphate + H2O2 + NH4(+). The catalysed reaction is pyridoxine 5'-phosphate + O2 = pyridoxal 5'-phosphate + H2O2. Its pathway is cofactor metabolism; pyridoxal 5'-phosphate salvage; pyridoxal 5'-phosphate from pyridoxamine 5'-phosphate: step 1/1. It participates in cofactor metabolism; pyridoxal 5'-phosphate salvage; pyridoxal 5'-phosphate from pyridoxine 5'-phosphate: step 1/1. In terms of biological role, catalyzes the oxidation of either pyridoxine 5'-phosphate (PNP) or pyridoxamine 5'-phosphate (PMP) into pyridoxal 5'-phosphate (PLP). The polypeptide is Pyridoxine/pyridoxamine 5'-phosphate oxidase (Rhodopseudomonas palustris (strain BisA53)).